A 341-amino-acid polypeptide reads, in one-letter code: Anthranilate phosphoribosyltransferase (341 aa).

Residues Gly80, Gly83–Asp84, Thr88, Asn90–Thr93, Lys108–Ser116, and Ser120 each bind 5-phospho-alpha-D-ribose 1-diphosphate. Gly80 is a binding site for anthranilate. Ser92 contacts Mg(2+). Asn111 provides a ligand contact to anthranilate. Position 166 (Arg166) interacts with anthranilate. Mg(2+) contacts are provided by Asp225 and Glu226.

This sequence belongs to the anthranilate phosphoribosyltransferase family. Homodimer. Mg(2+) serves as cofactor.

The enzyme catalyses N-(5-phospho-beta-D-ribosyl)anthranilate + diphosphate = 5-phospho-alpha-D-ribose 1-diphosphate + anthranilate. Its pathway is amino-acid biosynthesis; L-tryptophan biosynthesis; L-tryptophan from chorismate: step 2/5. Its function is as follows. Catalyzes the transfer of the phosphoribosyl group of 5-phosphorylribose-1-pyrophosphate (PRPP) to anthranilate to yield N-(5'-phosphoribosyl)-anthranilate (PRA). The protein is Anthranilate phosphoribosyltransferase of Brevibacillus brevis (strain 47 / JCM 6285 / NBRC 100599).